Consider the following 329-residue polypeptide: Putative dehydrogenase RB0419 (329 aa).

Belongs to the ornithine cyclodeaminase/mu-crystallin family.

The chain is Putative dehydrogenase RB0419 from Rhizobium meliloti (strain 1021) (Ensifer meliloti).